Consider the following 389-residue polypeptide: Phospho-N-acetylmuramoyl-pentapeptide-transferase (389 aa).

The next 10 membrane-spanning stretches (helical) occupy residues 25–45 (RAVM…PAVI), 73–93 (TMGG…WADL), 97–117 (FIWI…VDDY), 135–155 (FWQS…VSEA), 190–210 (ISYP…IVGA), 222–242 (GLVI…AYVM), 259–279 (AGEL…FLWF), 287–307 (FMGD…AVIV), 311–331 (IVLF…MLQV), and 366–386 (QVVV…LSTL).

This sequence belongs to the glycosyltransferase 4 family. MraY subfamily. Requires Mg(2+) as cofactor.

The protein localises to the cell inner membrane. It carries out the reaction UDP-N-acetyl-alpha-D-muramoyl-L-alanyl-gamma-D-glutamyl-meso-2,6-diaminopimeloyl-D-alanyl-D-alanine + di-trans,octa-cis-undecaprenyl phosphate = di-trans,octa-cis-undecaprenyl diphospho-N-acetyl-alpha-D-muramoyl-L-alanyl-D-glutamyl-meso-2,6-diaminopimeloyl-D-alanyl-D-alanine + UMP. The protein operates within cell wall biogenesis; peptidoglycan biosynthesis. In terms of biological role, catalyzes the initial step of the lipid cycle reactions in the biosynthesis of the cell wall peptidoglycan: transfers peptidoglycan precursor phospho-MurNAc-pentapeptide from UDP-MurNAc-pentapeptide onto the lipid carrier undecaprenyl phosphate, yielding undecaprenyl-pyrophosphoryl-MurNAc-pentapeptide, known as lipid I. In Paraburkholderia xenovorans (strain LB400), this protein is Phospho-N-acetylmuramoyl-pentapeptide-transferase.